The chain runs to 78 residues: MKPDVHPTYHETTVTCTCGNTFTTRSTKENGVVNAEVCSQCHPFYTGKQKILDVGGRVEKFERRFGRRRPGEKVGGAK.

The Zn(2+) site is built by Cys16, Cys18, Cys38, and Cys41.

Belongs to the bacterial ribosomal protein bL31 family. Type A subfamily. As to quaternary structure, part of the 50S ribosomal subunit. Requires Zn(2+) as cofactor.

Functionally, binds the 23S rRNA. The chain is Large ribosomal subunit protein bL31 from Frankia casuarinae (strain DSM 45818 / CECT 9043 / HFP020203 / CcI3).